The following is a 763-amino-acid chain: Phosphoglycerol transferase I (763 aa).

The next 4 membrane-spanning stretches (helical) occupy residues 1-21 (MSEL…AWKA), 26-46 (WWFA…ITLY), 77-97 (ILPG…LGWI), and 108-128 (VGYS…SPAF).

It belongs to the OpgB family.

The protein resides in the cell inner membrane. It catalyses the reaction a phosphatidylglycerol + a membrane-derived-oligosaccharide D-glucose = a 1,2-diacyl-sn-glycerol + a membrane-derived-oligosaccharide 6-(glycerophospho)-D-glucose.. It functions in the pathway glycan metabolism; osmoregulated periplasmic glucan (OPG) biosynthesis. Functionally, transfers a phosphoglycerol residue from phosphatidylglycerol to the membrane-bound nascent glucan backbones. The polypeptide is Phosphoglycerol transferase I (Salmonella agona (strain SL483)).